We begin with the raw amino-acid sequence, 1658 residues long: Silent chromatin protein ESC1 (1658 aa).

The span at 36 to 54 (DSKMKDQHGYSRVHNDKYR) shows a compositional bias: basic and acidic residues. Disordered stretches follow at residues 36-76 (DSKM…SSHI) and 156-499 (TSFQ…LENE). Composition is skewed to acidic residues over residues 205–214 (LENDEYELSE) and 245–254 (SNDEYAEEEG). A compositionally biased stretch (polar residues) spans 262 to 286 (GQEQANVENATQISSSDSSEGQNYS). Over residues 289-305 (VEMELEDDIDVESDAEK) the composition is skewed to acidic residues. The segment covering 335–352 (VIEKYESDEHKVHQRYSE) has biased composition (basic and acidic residues). The segment covering 365–375 (VDDESEDEESQ) has biased composition (acidic residues). A compositionally biased stretch (basic and acidic residues) spans 386–397 (VYHHNEHELDDK). Positions 398–407 (ELIEDIESSD) are enriched in acidic residues. A compositionally biased stretch (low complexity) spans 408-417 (SESQSAQESE). Composition is skewed to basic and acidic residues over residues 425–435 (EYKMKNEKSTS), 442–461 (SESRDQGFAKDAYTKNKVEQ), and 471–482 (DDIIRSSLDKNF). At Thr500 the chain carries Phosphothreonine. Ser532 carries the post-translational modification Phosphoserine. 2 disordered regions span residues 550 to 584 (SRNSNCPQKEEQVSESYLGHSNGSNLSGRSLDESE) and 589 to 608 (LKDFTGENNNNLKTDRGDLS). Positions 568–577 (GHSNGSNLSG) are enriched in polar residues. Phosphoserine is present on residues Ser579, Ser583, Ser608, and Ser662. 3 disordered regions span residues 770–819 (SKET…EDNT), 863–964 (EMSS…VKGT), and 1082–1115 (ENNTNMHDQVSQACSDSDRDQDSTAEKNVEGSAK). Residues 800-812 (QSKNFPGVANSTD) show a composition bias toward polar residues. Residues Ser865 and Ser866 each carry the phosphoserine modification. Residues 869 to 878 (ECVKQNDDGS) show a composition bias toward basic and acidic residues. Polar residues predominate over residues 879–905 (KTQISFSTDSPDNFQESNDNTEFSSTK). Phosphoserine occurs at positions 888 and 911. A compositionally biased stretch (basic and acidic residues) spans 918-931 (SLKKELTKAEVVDK). The segment covering 932-956 (LDEEESEDSYEQDYADPEPGNDEGS) has biased composition (acidic residues). Residues Ser937, Ser1092, Ser1096, Ser1098, Ser1166, Ser1176, and Ser1178 each carry the phosphoserine modification. Residues 1082-1096 (ENNTNMHDQVSQACS) show a composition bias toward polar residues. Basic and acidic residues predominate over residues 1097-1115 (DSDRDQDSTAEKNVEGSAK). A compositionally biased stretch (polar residues) spans 1197 to 1207 (STDASVNMKSV). Positions 1197–1216 (STDASVNMKSVSSKERDSDE) are disordered. Ser1214 and Ser1254 each carry phosphoserine. Over residues 1261-1272 (VKDKENLHKSEE) the composition is skewed to basic and acidic residues. The interval 1261–1315 (VKDKENLHKSEEPLVEGLQSEQHFEKKDHSENEEEFDTIYGDITSANIHSNAPDD) is disordered. Phosphoserine occurs at positions 1290, 1326, and 1332. Disordered regions lie at residues 1334-1482 (RLIE…TSPE) and 1503-1658 (PATT…SVDK). Basic and acidic residues predominate over residues 1335–1366 (LIEDSRRGKNQEESDEVNTSRERDLTFEKSVN). Phosphoserine occurs at positions 1403, 1409, 1450, and 1454. The span at 1407–1423 (LNSEPEEAELYELEIEG) shows a compositional bias: acidic residues. Residues 1463–1479 (YPYSNSENITAEKSAPT) are compositionally biased toward polar residues. Over residues 1507–1537 (LEKHDKTNVTSVLDDRSEHLSSHDVDNEPHD) the composition is skewed to basic and acidic residues. Ser1539 bears the Phosphoserine mark. 2 stretches are compositionally biased toward basic and acidic residues: residues 1550 to 1564 (PEHQAVDIPVKVEVK) and 1575 to 1591 (VLEEQKPSMELINDKSS). 2 positions are modified to phosphoserine: Ser1590 and Ser1591. Residues 1607 to 1626 (TKAKKKSRKRNYNSRRRKRK) show a composition bias toward basic residues. The segment covering 1648 to 1658 (RGQNTHPSVDK) has biased composition (polar residues).

As to quaternary structure, interacts with SIR4.

The protein resides in the nucleus. Involved in the clustering of telomeres at the nuclear periphery, forming discrete subcompartments that accumulate a complex of histone-binding silencing factors like SIR4. Required for SIR4-mediated anchoring and partitioning of plasmids. In Saccharomyces cerevisiae (strain ATCC 204508 / S288c) (Baker's yeast), this protein is Silent chromatin protein ESC1 (ESC1).